We begin with the raw amino-acid sequence, 116 residues long: Ribosome-binding factor A (116 aa).

It belongs to the RbfA family. As to quaternary structure, monomer. Binds 30S ribosomal subunits, but not 50S ribosomal subunits or 70S ribosomes.

The protein resides in the cytoplasm. In terms of biological role, one of several proteins that assist in the late maturation steps of the functional core of the 30S ribosomal subunit. Associates with free 30S ribosomal subunits (but not with 30S subunits that are part of 70S ribosomes or polysomes). Required for efficient processing of 16S rRNA. May interact with the 5'-terminal helix region of 16S rRNA. The sequence is that of Ribosome-binding factor A from Chlorobium phaeobacteroides (strain DSM 266 / SMG 266 / 2430).